The primary structure comprises 360 residues: Phospho-N-acetylmuramoyl-pentapeptide-transferase (360 aa).

The next 10 membrane-spanning stretches (helical) occupy residues 27–47, 71–91, 93–113, 128–148, 168–188, 199–219, 239–259, 262–282, 288–308, and 337–357; these read GAMITSALIVFLFGPTIINSL, TPTMGGLMIMTGILASCLLWA, LASVYVWVVLMVSVGFGAIGF, FSGKARLGIEFLIAAIAAFTI, LVINLSWFFIPFAAFVMVGAG, GLAIVPVMVAAASFGFIAYLS, LAVVLGAVIGAGLGFLWFNAP, AIFMGDTGSLALGGMLGTVAV, IVLAIIGGLFVMEALSVIIQV, and QVVIRFWIVAIILAMIGLSTL.

This sequence belongs to the glycosyltransferase 4 family. MraY subfamily. The cofactor is Mg(2+).

It localises to the cell inner membrane. It carries out the reaction UDP-N-acetyl-alpha-D-muramoyl-L-alanyl-gamma-D-glutamyl-meso-2,6-diaminopimeloyl-D-alanyl-D-alanine + di-trans,octa-cis-undecaprenyl phosphate = di-trans,octa-cis-undecaprenyl diphospho-N-acetyl-alpha-D-muramoyl-L-alanyl-D-glutamyl-meso-2,6-diaminopimeloyl-D-alanyl-D-alanine + UMP. It functions in the pathway cell wall biogenesis; peptidoglycan biosynthesis. Functionally, catalyzes the initial step of the lipid cycle reactions in the biosynthesis of the cell wall peptidoglycan: transfers peptidoglycan precursor phospho-MurNAc-pentapeptide from UDP-MurNAc-pentapeptide onto the lipid carrier undecaprenyl phosphate, yielding undecaprenyl-pyrophosphoryl-MurNAc-pentapeptide, known as lipid I. The protein is Phospho-N-acetylmuramoyl-pentapeptide-transferase of Brucella abortus (strain S19).